Here is a 94-residue protein sequence, read N- to C-terminus: Large ribosomal subunit protein uL23 (94 aa).

The protein belongs to the universal ribosomal protein uL23 family. As to quaternary structure, part of the 50S ribosomal subunit. Contacts protein L29, and trigger factor when it is bound to the ribosome.

One of the early assembly proteins it binds 23S rRNA. One of the proteins that surrounds the polypeptide exit tunnel on the outside of the ribosome. Forms the main docking site for trigger factor binding to the ribosome. The protein is Large ribosomal subunit protein uL23 of Geobacter sulfurreducens (strain ATCC 51573 / DSM 12127 / PCA).